Consider the following 707-residue polypeptide: 65-kDa microtubule-associated protein 3 (707 aa).

Coiled-coil stretches lie at residues 49-84, 157-179, 269-289, 354-374, and 464-486; these read LEVYRRKVDQANRCRAQLRQAIADAEAQLAAICSAM, NLSMRKLEELHCQLQVLQKEKID, QQEYQHITCNIAASEHEITEA, IVDATMVLEHLEQHISKIKEE, and LEEYNILRQEREEEHRRQRDQKK. The interval 495–574 is disordered; the sequence is QEALYGSKPS…PSRKQSMNPS (80 aa). The segment covering 500-512 has biased composition (low complexity); the sequence is GSKPSPSKPLGGK. Phosphoserine occurs at positions 504 and 528.

It belongs to the MAP65/ASE1 family. As to quaternary structure, forms a dimer. Binds to microtubules (MT) during cell division. Bundles polymerized MT via the formation of 25-nm crossbridges with centrally located endocytic MT, and midline phragmoplast MT. In terms of tissue distribution, expressed in all tissues enriched in dividing cells, such as the root and shoot apical meristem, foliar primordia, and young leaves, and embryos.

It is found in the nucleus. The protein resides in the cytoplasm. Its subcellular location is the cytoskeleton. It localises to the phragmoplast. Microtubule-associated protein that plays a critical role in organizing the mitotic microtubule array during both early and late mitosis in all plant organs. Essential for the cytokinesis, especially in roots, by maintaining the integrity of the overlapped microtubules in the phragmoplast. Required during root morphogenesis. Needed for giant cell development during root knot nematode infection, where cytokinesis is initiated but not completed. This chain is 65-kDa microtubule-associated protein 3 (MAP65-3), found in Arabidopsis thaliana (Mouse-ear cress).